The chain runs to 368 residues: WD repeat-containing protein wdr-5.1 (368 aa).

The disordered stretch occupies residues 1-64 (MDPAQNQPNT…APTTSQESTI (64 aa)). A compositionally biased stretch (low complexity) spans 16 to 42 (PAVEEAQGVNNSEAEAPAPAALSSVSP). WD repeat units follow at residues 77-116 (GHTK…CERT), 119-158 (GHKL…MAKT), 161-200 (GHTN…CVKT), 203-242 (AHSD…CVKT), 246-285 (DENP…TLKQ), 288-330 (GHEN…VVQS), and 333-368 (GHTQ…RSDS).

The protein is WD repeat-containing protein wdr-5.1 of Caenorhabditis briggsae.